We begin with the raw amino-acid sequence, 820 residues long: Sodium/hydrogen exchanger 1 (820 aa).

Residues 1–102 (MMLRWSGIWG…FPVLDIDYLH (102 aa)) lie on the Extracellular side of the membrane. The interval 44–71 (ASTIRGSEPPRERSIGDVTTAPSEPLHH) is disordered. The helical transmembrane segment at 103 to 125 (VRTPFEISLWILLACLMKIGFHV) threads the bilayer. Topologically, residues 126–134 (IPTISSIVP) are cytoplasmic. The chain crosses the membrane as a helical span at residues 135–152 (ESCLLIVVGLLVGGLIKG). Topologically, residues 153–162 (VGETPPFLQS) are extracellular. The helical transmembrane segment at 163–180 (DVFFLFLLPPIILDAGYF) threads the bilayer. Over 181 to 190 (LPLRQFTENL) the chain is Cytoplasmic. Residues 191–219 (GTILIFAVVGTLWNAFFLGGLLYAVCLVG) traverse the membrane as a helical segment. Residues 220 to 226 (GEQINNI) are Extracellular-facing. The helical transmembrane segment at 227 to 253 (GLLDTLLFGSIISAVDPVAVLAVFEEI) threads the bilayer. Residues 254-256 (HIN) lie on the Cytoplasmic side of the membrane. The helical transmembrane segment at 257–287 (ELLHILVFGESLLNDAVTVVLYHLFEEFASY) threads the bilayer. Over 288 to 291 (EYVG) the chain is Extracellular. Residues 292 to 326 (ISDIFLGFLSFFVVSLGGVFVGVVYGVIAAFTSRF) form a helical membrane-spanning segment. Over 327–332 (TSHIRV) the chain is Cytoplasmic. A helical transmembrane segment spans residues 333–345 (IEPLFVFLYSYMA). The Extracellular portion of the chain corresponds to 346–354 (YLSAELFHL). A helical membrane pass occupies residues 355–375 (SGIMALIASGVVMRPYVEANI). Over 376–377 (SH) the chain is Cytoplasmic. A helical membrane pass occupies residues 378–408 (KSHTTIKYFLKMWSSVSETLIFIFLGVSTVA). The Extracellular portion of the chain corresponds to 409–414 (GSHQWN). A helical membrane pass occupies residues 415–442 (WTFVISTLLFCLIARVLGVLVLTWFINK). The Cytoplasmic portion of the chain corresponds to 443–448 (FRIVKL). The helical transmembrane segment at 449 to 473 (TPKDQFIIAYGGLRGAIAFSLGYLL) threads the bilayer. At 474 to 479 (DKKHFP) the chain is on the extracellular side. The helical transmembrane segment at 480–509 (MCDLFLTAIITVIFFTVFVQGMTIRPLVDL) threads the bilayer. Positions 505-571 (PLVDLLAVKK…VKKCLIAGER (67 aa)) are interaction with TESC. At 510–820 (LAVKKKQETK…EGEPFIPKGQ (311 aa)) the chain is on the cytoplasmic side. Residues 513–520 (KKKQETKR) form a PI(4,5)P2-binding region region. The tract at residues 519–549 (KRSINEEIHTQFLDHLLTGIEDICGHYGHHH) is interaction with CHP2. Residues 544-549 (HYGHHH) form a confers pH-dependent PI(4,5)P2 binding region. Positions 556–564 (RFNKKYVKK) are PI(4,5)P2-binding region. Phosphoserine occurs at positions 603 and 606. Thr-607 is subject to Phosphothreonine. Residues Ser-609 and Ser-652 each carry the phosphoserine modification. Residues 637–820 (KILRSNLQKT…EGEPFIPKGQ (184 aa)) form an interaction with TESC region. Residues 637 to 820 (KILRSNLQKT…EGEPFIPKGQ (184 aa)) are interaction with CALM1. Residues 688–691 (LTVP) form an interaction with PPP3CA region. A phosphoserine mark is found at Ser-697, Ser-701, and Ser-707. The segment at 719 to 724 (PVITID) is interaction with PPP3CA. Phosphoserine occurs at positions 727, 730, and 733. The segment at 747 to 820 (GLKRGPRTTP…EGEPFIPKGQ (74 aa)) is disordered. Phosphothreonine is present on residues Thr-755 and Thr-784. A phosphoserine mark is found at Ser-790 and Ser-801.

It belongs to the monovalent cation:proton antiporter 1 (CPA1) transporter (TC 2.A.36) family. As to quaternary structure, homodimer; dimerization is crucial for its function. Oligomer. Interacts with CALM1 in a calcium-dependent manner. Interacts with TESC. Interacts (via residues 504-563) with CHP1. The interaction with CHP1 occurs at the plasma membrane in a calcium-dependent manner. Interacts with CHP2. The interaction with CHP2 occurs in a calcium-dependent manner. Interacts with EZR; regulates the cytoskeletal interactions of SLC9A1 and promotes stress fiber formation. In terms of processing, N-glycosylated and O-glycosylated in the N-terminal region. Ubiquitinated, leading to its degradation by the proteasome. Ubiquitination is reduced by CHP1. Post-translationally, palmitoylated; may play a major role in SLC9A1 regulation. In terms of processing, phosphorylation at Thr-784 increases SLC9A1 activity; specifically dephosphorylated by PPP3CA. Specifically dephosphorylated at Thr-784 by PPP3CA that negatively regulates SLC9A1 activity. Phosphorylation at Ser-652 by AKT1 reduces SLC9A1 binding to CALM1. As to expression, widely expressed.

The protein resides in the cell membrane. The protein localises to the basolateral cell membrane. It catalyses the reaction Na(+)(in) + H(+)(out) = Na(+)(out) + H(+)(in). The catalysed reaction is Li(+)(out) + H(+)(in) = Li(+)(in) + H(+)(out). It carries out the reaction Li(+)(in) + Na(+)(out) = Li(+)(out) + Na(+)(in). Its activity is regulated as follows. Activated at acidic pHs. Inhibited by cariporide and eniporide. Inhibited by amiloride and 5-amino-substituted derivatives. Phosphatidylinositol 4,5-bisphosphate (PI(4,5)P2) bind and activates SLC9A1 transporter activity. In terms of biological role, electroneutral Na(+) /H(+) antiporter that extrudes Na(+) in exchange for external protons driven by the inward sodium ion chemical gradient, protecting cells from acidification that occurs from metabolism. Exchanges intracellular H(+) ions for extracellular Na(+) in 1:1 stoichiometry. Plays a key role in maintening intracellular pH neutral and cell volume, and thus is important for cell growth, proliferation, migration and survival. In addition, can transport lithium Li(+) and also functions as a Na(+)/Li(+) antiporter. SLC9A1 also functions in membrane anchoring and organization of scaffolding complexes that coordinate signaling inputs. The polypeptide is Sodium/hydrogen exchanger 1 (Slc9a1) (Rattus norvegicus (Rat)).